We begin with the raw amino-acid sequence, 1157 residues long: ATP-dependent helicase/deoxyribonuclease subunit B (1157 aa).

The UvrD-like helicase ATP-binding domain maps to 1–277 (MTLQIIAGKS…KLFLENKRAK (277 aa)). 8–15 (GKSGTGKT) contributes to the ATP binding site. Residues 272–578 (ENKRAKSDSL…EFSLLPPSLD (307 aa)) form the UvrD-like helicase C-terminal domain. [4Fe-4S] cluster is bound by residues C794, C1115, C1118, and C1124.

This sequence belongs to the helicase family. AddB/RexB type 1 subfamily. Heterodimer of AddA and AddB. Requires Mg(2+) as cofactor. [4Fe-4S] cluster serves as cofactor.

In terms of biological role, the heterodimer acts as both an ATP-dependent DNA helicase and an ATP-dependent, dual-direction single-stranded exonuclease. Recognizes the chi site generating a DNA molecule suitable for the initiation of homologous recombination. The AddB subunit has 5' -&gt; 3' nuclease activity but not helicase activity. In Listeria welshimeri serovar 6b (strain ATCC 35897 / DSM 20650 / CCUG 15529 / CIP 8149 / NCTC 11857 / SLCC 5334 / V8), this protein is ATP-dependent helicase/deoxyribonuclease subunit B.